A 180-amino-acid polypeptide reads, in one-letter code: ATP synthase subunit delta (180 aa).

This sequence belongs to the ATPase delta chain family. In terms of assembly, F-type ATPases have 2 components, F(1) - the catalytic core - and F(0) - the membrane proton channel. F(1) has five subunits: alpha(3), beta(3), gamma(1), delta(1), epsilon(1). F(0) has three main subunits: a(1), b(2) and c(10-14). The alpha and beta chains form an alternating ring which encloses part of the gamma chain. F(1) is attached to F(0) by a central stalk formed by the gamma and epsilon chains, while a peripheral stalk is formed by the delta and b chains.

It localises to the cell inner membrane. Its function is as follows. F(1)F(0) ATP synthase produces ATP from ADP in the presence of a proton or sodium gradient. F-type ATPases consist of two structural domains, F(1) containing the extramembraneous catalytic core and F(0) containing the membrane proton channel, linked together by a central stalk and a peripheral stalk. During catalysis, ATP synthesis in the catalytic domain of F(1) is coupled via a rotary mechanism of the central stalk subunits to proton translocation. Functionally, this protein is part of the stalk that links CF(0) to CF(1). It either transmits conformational changes from CF(0) to CF(1) or is implicated in proton conduction. The chain is ATP synthase subunit delta from Geobacter metallireducens (strain ATCC 53774 / DSM 7210 / GS-15).